Reading from the N-terminus, the 182-residue chain is Inorganic pyrophosphatase (182 aa).

Substrate contacts are provided by K30, R44, and Y56. Residues D66, D71, and D103 each coordinate Mg(2+). Y142 provides a ligand contact to substrate.

It belongs to the PPase family. In terms of assembly, homohexamer. It depends on Mg(2+) as a cofactor.

The protein resides in the cytoplasm. The catalysed reaction is diphosphate + H2O = 2 phosphate + H(+). In terms of biological role, catalyzes the hydrolysis of inorganic pyrophosphate (PPi) forming two phosphate ions. This chain is Inorganic pyrophosphatase, found in Buchnera aphidicola subsp. Acyrthosiphon pisum (strain APS) (Acyrthosiphon pisum symbiotic bacterium).